Here is a 372-residue protein sequence, read N- to C-terminus: Cytochrome b (372 aa).

The next 4 membrane-spanning stretches (helical) occupy residues 25 to 45, 69 to 90, 105 to 125, and 170 to 190; these read FGSM…FLAI, WIMQ…YIHI, WVSG…GYVL, and FFAL…IHVM. Residues His75 and His89 each contribute to the heme b site. Heme b contacts are provided by His174 and His188. Residue His193 participates in a ubiquinone binding. 4 helical membrane-spanning segments follow: residues 218-238, 280-300, 312-332, and 339-358; these read YKDT…TSFF, LGGT…PFTH, MAQV…WAAT, and FTTI…IINP.

It belongs to the cytochrome b family. As to quaternary structure, the cytochrome bc1 complex contains 3 respiratory subunits (MT-CYB, CYC1 and UQCRFS1), 2 core proteins (UQCRC1 and UQCRC2) and probably 6 low-molecular weight proteins. The cofactor is heme b.

Its subcellular location is the mitochondrion inner membrane. In terms of biological role, component of the ubiquinol-cytochrome c reductase complex (complex III or cytochrome b-c1 complex) that is part of the mitochondrial respiratory chain. The b-c1 complex mediates electron transfer from ubiquinol to cytochrome c. Contributes to the generation of a proton gradient across the mitochondrial membrane that is then used for ATP synthesis. This Heterodon simus (Southern hognose snake) protein is Cytochrome b (MT-CYB).